The primary structure comprises 360 residues: MPTILVSALEASSNIHLEELRQNLPKDYRFIGVFEGKNALYSPREFSIMGFRDVIGRLGFLLKAHKEMVQLAKQADMVLLMDSSSFNIPLAKKIKKQDPHKKIMYYILPQVWAWKKWRAKSLEKYCDFLGAILPFEVGYYQKKAQYVGHPLLDEIKYYKKDIKGETLVFMPGSRKSEIAKIFPLFVKAAQILEQNEGFKRRVLVVPSFFKGLDLKALYGEDIELFEISYDAHKSLFEAEFAFICSGTATLEAALIGTPFVLAYRAKTMDFLIARMLVNLHYIGLANIFYNALNDETPGLGESQLHPELIQHFLSVEGLLKAYEEMDRERYFKESLRLREYLASGSARKIANEMAFLLNLT.

Belongs to the LpxB family.

It catalyses the reaction a lipid X + a UDP-2-N,3-O-bis[(3R)-3-hydroxyacyl]-alpha-D-glucosamine = a lipid A disaccharide + UDP + H(+). It functions in the pathway bacterial outer membrane biogenesis; LPS lipid A biosynthesis. Condensation of UDP-2,3-diacylglucosamine and 2,3-diacylglucosamine-1-phosphate to form lipid A disaccharide, a precursor of lipid A, a phosphorylated glycolipid that anchors the lipopolysaccharide to the outer membrane of the cell. In Helicobacter pylori (strain HPAG1), this protein is Lipid-A-disaccharide synthase.